Here is a 137-residue protein sequence, read N- to C-terminus: Large ribosomal subunit protein uL16 (137 aa).

It belongs to the universal ribosomal protein uL16 family. Part of the 50S ribosomal subunit.

Functionally, binds 23S rRNA and is also seen to make contacts with the A and possibly P site tRNAs. The polypeptide is Large ribosomal subunit protein uL16 (Psychrobacter sp. (strain PRwf-1)).